The following is a 185-amino-acid chain: UPF0200 protein Mevan_0592 (185 aa).

ATP is bound at residue Gly-8–Ser-15.

The protein belongs to the UPF0200 family.

This chain is UPF0200 protein Mevan_0592, found in Methanococcus vannielii (strain ATCC 35089 / DSM 1224 / JCM 13029 / OCM 148 / SB).